Reading from the N-terminus, the 468-residue chain is MSSGKIAQVIGPVVDVLFAAGEKLPEINNALVVYKNDERKTKIVLEVALELGDGMVRTIAMESTDGLTRGMEVLDTGRPISVPVGKETLGRVFNVLGDTIDLEAPFTEDAERQPIHKKAPTFDELSTSSEILETGIKVIDLLAPYLKGGKVGLFGGAGVGKTVLIQELIHNIAQEHGGISVFTGVGERTREGNDLYWEMKESGVIEKTAMVFGQMNEPPGARMRVALTGLTIAEYFRDVEGQDVLLFIDNIFRFTQAGSEVSALLGRMPSAVGYQPTLATEMGQLQERITSTKKGSVTSIQAIYVPADDYTDPAPATAFAHLDSTTNLERKLVQLGIYPAVDPLASSSRALAPEIVGEEHYAVAAEVKRVLQRYHELQDIIAILGMDELSDEEKTLVARARRIQFFLSQNXNVAEQFTGQPGSYVPVAETVRGFKEILDGKYDHLPEDAFRGVGSIEDVIAKAEKMGF.

155-162 (GGAGVGKT) lines the ATP pocket.

It belongs to the ATPase alpha/beta chains family. In terms of assembly, F-type ATPases have 2 components, CF(1) - the catalytic core - and CF(0) - the membrane proton channel. CF(1) has five subunits: alpha(3), beta(3), gamma(1), delta(1), epsilon(1). CF(0) has three main subunits: a(1), b(2) and c(9-12). The alpha and beta chains form an alternating ring which encloses part of the gamma chain. CF(1) is attached to CF(0) by a central stalk formed by the gamma and epsilon chains, while a peripheral stalk is formed by the delta and b chains.

It localises to the cell membrane. It carries out the reaction ATP + H2O + 4 H(+)(in) = ADP + phosphate + 5 H(+)(out). Functionally, produces ATP from ADP in the presence of a proton gradient across the membrane. The catalytic sites are hosted primarily by the beta subunits. This is ATP synthase subunit beta from Streptococcus pneumoniae serotype 19F (strain G54).